We begin with the raw amino-acid sequence, 599 residues long: NADH-quinone oxidoreductase subunit C/D (599 aa).

Polar residues predominate over residues 1–15 (MTDLTAQELAQPSWQ). A disordered region spans residues 1–21 (MTDLTAQELAQPSWQTRDHQD). The interval 1–189 (MTDLTAQELA…DPFELTKQKE (189 aa)) is NADH dehydrogenase I subunit C. An NADH dehydrogenase I subunit D region spans residues 213 to 599 (DFMFLNLGPN…IDFVMSDVDR (387 aa)).

In the N-terminal section; belongs to the complex I 30 kDa subunit family. This sequence in the C-terminal section; belongs to the complex I 49 kDa subunit family. NDH-1 is composed of 13 different subunits. Subunits NuoB, CD, E, F, and G constitute the peripheral sector of the complex.

The protein resides in the cell inner membrane. The enzyme catalyses a quinone + NADH + 5 H(+)(in) = a quinol + NAD(+) + 4 H(+)(out). Functionally, NDH-1 shuttles electrons from NADH, via FMN and iron-sulfur (Fe-S) centers, to quinones in the respiratory chain. The immediate electron acceptor for the enzyme in this species is believed to be ubiquinone. Couples the redox reaction to proton translocation (for every two electrons transferred, four hydrogen ions are translocated across the cytoplasmic membrane), and thus conserves the redox energy in a proton gradient. This Erwinia tasmaniensis (strain DSM 17950 / CFBP 7177 / CIP 109463 / NCPPB 4357 / Et1/99) protein is NADH-quinone oxidoreductase subunit C/D.